The following is a 410-amino-acid chain: Beta-arrestin-2 (410 aa).

At Tyr-48 the chain carries Phosphotyrosine. 2 positions are modified to hydroxyproline; by PHD2: Pro-176 and Pro-181. The segment at 241-410 (ADICLFSTAQ…KDDDCDDQFC (170 aa)) is interaction with TRAF6. Ser-361 is subject to Phosphoserine. Residues 378 to 410 (DTNYATDDDIVFEDFARLRLKGMKDDDCDDQFC) are interaction with AP2B1. At Thr-383 the chain carries Phosphothreonine; by CaMK2. A [DE]-X(1,2)-F-X-X-[FL]-X-X-X-R motif motif is present at residues 386–396 (DIVFEDFARLR).

The protein belongs to the arrestin family. Homooligomer; the self-association is mediated by InsP6-binding. Heterooligomer with ARRB1; the association is mediated by InsP6-binding. Interacts with ADRB2 and CHRM2. Interacts with PDE4A. Interacts with PDE4D. Interacts with MAPK10, MAPK1 and MAPK3. Interacts with DRD2. Interacts with FSHR. Interacts with CLTC. Interacts with HTR2C. Interacts with CCR5. Interacts with CXCR4. Interacts with SRC. Interacts with DUSP16; the interaction is interrupted by stimulation of AGTR1 and activation of MAPK10. Interacts with CHUK; the interaction is enhanced stimulation of ADRB2. Interacts with RELA. Interacts with MDM2; the interaction is enhanced by activation of GPCRs. Interacts with SLC9A5. Interacts with TRAF6. Interacts with IGF1R. Interacts with ENG. Interacts with KIR2DL1, KIR2DL3 and KIR2DL4. Interacts with LDLR. Interacts with AP2B1. Interacts with C5AR1. Interacts with RAF1. Interacts with MAP2K1. Interacts with MAPK1. Interacts with MAPK10; the interaction enhances MAPK10 activation by MAP3K5. Interacts with MAP2K4; the interaction is enhanced by presence of MAP3K5 and MAPK10. Interacts with MAP3K5. Interacts with AKT1. Interacts with IKBKB and MAP3K14. Interacts with SMO (activated). Interacts with GSK3A and GSK3B. Associates with protein phosphatase 2A (PP2A). Interacts with CXCR4; the interaction is dependent on C-terminal phosphorylation of CXCR4 and allows activation of MAPK1 and MAPK3. Interacts with GPR143. Interacts with HCK and CXCR1 (phosphorylated). Interacts with ACKR3 and ACKR4. Interacts with ARRDC1; the interaction is direct. Interacts with GPR61, GPR62 and GPR135. Interacts (via NACHT and LRR domains) with NLRP3; this interaction is direct and inducible by omega-3 polyunsaturated fatty acids (PUFAs). Interacts with FFAR4 (via C-terminus); this interaction is stimulated by long-chain fatty acids (LCFAs). Interacts with GPR35. Interacts with GPR84. Interacts with TIGIT; this interaction inhibits the NF-kappa-B pathway. Interacts with TGFBR3. In terms of processing, phosphorylated at Thr-383 in the cytoplasm; probably dephosphorylated at the plasma membrane. The phosphorylation does not regulate internalization and recycling of ADRB2, interaction with clathrin or AP2B1. Post-translationally, the ubiquitination status appears to regulate the formation and trafficking of beta-arrestin-GPCR complexes and signaling. Ubiquitination appears to occur GPCR-specific. Ubiquitinated by MDM2; the ubiquitination is required for rapid internalization of ADRB2. Deubiquitinated by USP33; the deubiquitination leads to a dissociation of the beta-arrestin-GPCR complex. Stimulation of a class A GPCR, such as ADRB2, induces transient ubiquitination and subsequently promotes association with USP33. Stimulation of a class B GPCR promotes a sustained ubiquitination. Deubiquitinated by USP20; allowing USP20 to deubiquitinate TRAF6 leading to inhibition of NF-kappa-B signaling. Hydroxylation by PHD2 modulates the rate of internalization by slowing down recruitment to the plasma membrane and inhibiting subsequent co-internalization with class A receptors. Predominantly localized in neuronal tissues and in the spleen.

Its subcellular location is the cytoplasm. It localises to the nucleus. The protein localises to the cell membrane. It is found in the membrane. The protein resides in the clathrin-coated pit. Its subcellular location is the cytoplasmic vesicle. In terms of biological role, functions in regulating agonist-mediated G-protein coupled receptor (GPCR) signaling by mediating both receptor desensitization and resensitization processes. During homologous desensitization, beta-arrestins bind to the GPRK-phosphorylated receptor and sterically preclude its coupling to the cognate G-protein; the binding appears to require additional receptor determinants exposed only in the active receptor conformation. The beta-arrestins target many receptors for internalization by acting as endocytic adapters (CLASPs, clathrin-associated sorting proteins) and recruiting the GPRCs to the adapter protein 2 complex 2 (AP-2) in clathrin-coated pits (CCPs). However, the extent of beta-arrestin involvement appears to vary significantly depending on the receptor, agonist and cell type. Internalized arrestin-receptor complexes traffic to intracellular endosomes, where they remain uncoupled from G-proteins. Two different modes of arrestin-mediated internalization occur. Class A receptors, like ADRB2, OPRM1, ENDRA, D1AR and ADRA1B dissociate from beta-arrestin at or near the plasma membrane and undergo rapid recycling. Class B receptors, like AVPR2, AGTR1, NTSR1, TRHR and TACR1 internalize as a complex with arrestin and traffic with it to endosomal vesicles, presumably as desensitized receptors, for extended periods of time. Receptor resensitization then requires that receptor-bound arrestin is removed so that the receptor can be dephosphorylated and returned to the plasma membrane. Mediates endocytosis of CCR7 following ligation of CCL19 but not CCL21. Involved in internalization of P2RY1, P2RY4, P2RY6 and P2RY11 and ATP-stimulated internalization of P2RY2. Involved in phosphorylation-dependent internalization of OPRD1 and subsequent recycling or degradation. Involved in ubiquitination of IGF1R. Beta-arrestins function as multivalent adapter proteins that can switch the GPCR from a G-protein signaling mode that transmits short-lived signals from the plasma membrane via small molecule second messengers and ion channels to a beta-arrestin signaling mode that transmits a distinct set of signals that are initiated as the receptor internalizes and transits the intracellular compartment. Acts as a signaling scaffold for MAPK pathways such as MAPK1/3 (ERK1/2) and MAPK10 (JNK3). ERK1/2 and JNK3 activated by the beta-arrestin scaffold are largely excluded from the nucleus and confined to cytoplasmic locations such as endocytic vesicles, also called beta-arrestin signalosomes. Acts as a signaling scaffold for the AKT1 pathway. GPCRs for which the beta-arrestin-mediated signaling relies on both ARRB1 and ARRB2 (codependent regulation) include ADRB2, F2RL1 and PTH1R. For some GPCRs the beta-arrestin-mediated signaling relies on either ARRB1 or ARRB2 and is inhibited by the other respective beta-arrestin form (reciprocal regulation). Increases ERK1/2 signaling in AGTR1- and AVPR2-mediated activation (reciprocal regulation). Involved in CCR7-mediated ERK1/2 signaling involving ligand CCL19. Is involved in type-1A angiotensin II receptor/AGTR1-mediated ERK activity. Is involved in type-1A angiotensin II receptor/AGTR1-mediated MAPK10 activity. Is involved in dopamine-stimulated AKT1 activity in the striatum by disrupting the association of AKT1 with its negative regulator PP2A. Involved in AGTR1-mediated chemotaxis. Appears to function as signaling scaffold involved in regulation of MIP-1-beta-stimulated CCR5-dependent chemotaxis. Involved in attenuation of NF-kappa-B-dependent transcription in response to GPCR or cytokine stimulation by interacting with and stabilizing CHUK. Suppresses UV-induced NF-kappa-B-dependent activation by interacting with CHUK. The function is promoted by stimulation of ADRB2 and dephosphorylation of ARRB2. Involved in IL8-mediated granule release in neutrophils. Involved in p53/TP53-mediated apoptosis by regulating MDM2 and reducing the MDM2-mediated degradation of p53/TP53. May serve as nuclear messenger for GPCRs. Upon stimulation of OR1D2, may be involved in regulation of gene expression during the early processes of fertilization. Also involved in regulation of receptors other than GPCRs. Involved in endocytosis of TGFBR2 and TGFBR3 and down-regulates TGF-beta signaling such as NF-kappa-B activation. Involved in endocytosis of low-density lipoprotein receptor/LDLR. Involved in endocytosis of smoothened homolog/Smo, which also requires GRK2. Involved in endocytosis of SLC9A5. Involved in endocytosis of ENG and subsequent TGF-beta-mediated ERK activation and migration of epithelial cells. Involved in Toll-like receptor and IL-1 receptor signaling through the interaction with TRAF6 which prevents TRAF6 autoubiquitination and oligomerization required for activation of NF-kappa-B and JUN. Involved in insulin resistance by acting as insulin-induced signaling scaffold for SRC, AKT1 and INSR. Involved in regulation of inhibitory signaling of natural killer cells by recruiting PTPN6 and PTPN11 to KIR2DL1. Involved in the internalization of the atypical chemokine receptor ACKR3. Acts as an adapter protein coupling FFAR4 receptor to specific downstream signaling pathways, as well as mediating receptor endocytosis. During the activation step of NLRP3 inflammasome, directly associates with NLRP3 leading to inhibition of pro-inflammatory cytokine release and inhibition of inflammation. In Rattus norvegicus (Rat), this protein is Beta-arrestin-2 (Arrb2).